Here is a 228-residue protein sequence, read N- to C-terminus: MIPRVIRLWLPSALFLSQVPGCVPLHGPSTITGAVGESLSVSCQYEEKFKTKDKFWCRGSLKVLCKDIVKTSSSEEVRNGRVTIRDHPDNLTFTVTYESLTLEDADTYMCAVDISLFDGSLGFDKYFKIELSVVPSEDPVTGSSLESGRDILESPTSSVGHTHPSVTTDDTIPAPCPQPRSLRSSLYFWVLVSLKLFLFLSMLGAVLWVNRPQRCSGGSSSRPCYENQ.

A signal peptide spans 1 to 24 (MIPRVIRLWLPSALFLSQVPGCVP). One can recognise an Ig-like V-type domain in the interval 25 to 126 (LHGPSTITGA…FDGSLGFDKY (102 aa)). At 25 to 187 (LHGPSTITGA…QPRSLRSSLY (163 aa)) the chain is on the extracellular side. Cysteines 43 and 110 form a disulfide. Asparagine 90 carries an N-linked (GlcNAc...) asparagine glycan. The segment at 139–174 (PVTGSSLESGRDILESPTSSVGHTHPSVTTDDTIPA) is disordered. A compositionally biased stretch (polar residues) spans 154–170 (SPTSSVGHTHPSVTTDD). The chain crosses the membrane as a helical span at residues 188–208 (FWVLVSLKLFLFLSMLGAVLW). Over 209 to 228 (VNRPQRCSGGSSSRPCYENQ) the chain is Cytoplasmic.

The protein belongs to the CD300 family. In terms of assembly, interacts with TYROBP, HCST and FcR gamma. In terms of tissue distribution, present on the surface of mast cells, dendritic cells, peritoneal macrophages and a subset of B-cells (at protein level).

Its subcellular location is the cell membrane. Its function is as follows. Acts as an activating receptor in mast cells and macrophages. This Mus musculus (Mouse) protein is CMRF-35-like molecule 4.